The sequence spans 225 residues: Phosphatidylserine decarboxylase proenzyme (225 aa).

Ser188 (schiff-base intermediate with substrate; via pyruvic acid) is an active-site residue. Ser188 is subject to Pyruvic acid (Ser); by autocatalysis.

This sequence belongs to the phosphatidylserine decarboxylase family. PSD-A subfamily. Heterodimer of a large membrane-associated beta subunit and a small pyruvoyl-containing alpha subunit. Pyruvate serves as cofactor. Is synthesized initially as an inactive proenzyme. Formation of the active enzyme involves a self-maturation process in which the active site pyruvoyl group is generated from an internal serine residue via an autocatalytic post-translational modification. Two non-identical subunits are generated from the proenzyme in this reaction, and the pyruvate is formed at the N-terminus of the alpha chain, which is derived from the carboxyl end of the proenzyme. The post-translation cleavage follows an unusual pathway, termed non-hydrolytic serinolysis, in which the side chain hydroxyl group of the serine supplies its oxygen atom to form the C-terminus of the beta chain, while the remainder of the serine residue undergoes an oxidative deamination to produce ammonia and the pyruvoyl prosthetic group on the alpha chain.

It localises to the cell membrane. It carries out the reaction a 1,2-diacyl-sn-glycero-3-phospho-L-serine + H(+) = a 1,2-diacyl-sn-glycero-3-phosphoethanolamine + CO2. Its pathway is phospholipid metabolism; phosphatidylethanolamine biosynthesis; phosphatidylethanolamine from CDP-diacylglycerol: step 2/2. In terms of biological role, catalyzes the formation of phosphatidylethanolamine (PtdEtn) from phosphatidylserine (PtdSer). This is Phosphatidylserine decarboxylase proenzyme from Parvibaculum lavamentivorans (strain DS-1 / DSM 13023 / NCIMB 13966).